Reading from the N-terminus, the 177-residue chain is Large ribosomal subunit protein uL6 (177 aa).

This sequence belongs to the universal ribosomal protein uL6 family. Part of the 50S ribosomal subunit.

Its function is as follows. This protein binds to the 23S rRNA, and is important in its secondary structure. It is located near the subunit interface in the base of the L7/L12 stalk, and near the tRNA binding site of the peptidyltransferase center. This Pseudomonas fluorescens (strain Pf0-1) protein is Large ribosomal subunit protein uL6.